Consider the following 198-residue polypeptide: Segregation and condensation protein B (198 aa).

This sequence belongs to the ScpB family. In terms of assembly, homodimer. Homodimerization may be required to stabilize the binding of ScpA to the Smc head domains. Component of a cohesin-like complex composed of ScpA, ScpB and the Smc homodimer, in which ScpA and ScpB bind to the head domain of Smc. The presence of the three proteins is required for the association of the complex with DNA.

The protein localises to the cytoplasm. Its function is as follows. Participates in chromosomal partition during cell division. May act via the formation of a condensin-like complex containing Smc and ScpA that pull DNA away from mid-cell into both cell halves. This Streptococcus mutans serotype c (strain ATCC 700610 / UA159) protein is Segregation and condensation protein B.